A 321-amino-acid polypeptide reads, in one-letter code: Lipoyl synthase (321 aa).

The [4Fe-4S] cluster site is built by C68, C73, C79, C94, C98, C101, and S308. In terms of domain architecture, Radical SAM core spans 80–297; it reads FNHGTATFMI…KAEALAMGFT (218 aa).

It belongs to the radical SAM superfamily. Lipoyl synthase family. [4Fe-4S] cluster is required as a cofactor.

The protein resides in the cytoplasm. The enzyme catalyses [[Fe-S] cluster scaffold protein carrying a second [4Fe-4S](2+) cluster] + N(6)-octanoyl-L-lysyl-[protein] + 2 oxidized [2Fe-2S]-[ferredoxin] + 2 S-adenosyl-L-methionine + 4 H(+) = [[Fe-S] cluster scaffold protein] + N(6)-[(R)-dihydrolipoyl]-L-lysyl-[protein] + 4 Fe(3+) + 2 hydrogen sulfide + 2 5'-deoxyadenosine + 2 L-methionine + 2 reduced [2Fe-2S]-[ferredoxin]. It participates in protein modification; protein lipoylation via endogenous pathway; protein N(6)-(lipoyl)lysine from octanoyl-[acyl-carrier-protein]: step 2/2. Its function is as follows. Catalyzes the radical-mediated insertion of two sulfur atoms into the C-6 and C-8 positions of the octanoyl moiety bound to the lipoyl domains of lipoate-dependent enzymes, thereby converting the octanoylated domains into lipoylated derivatives. This Edwardsiella ictaluri (strain 93-146) protein is Lipoyl synthase.